Here is a 774-residue protein sequence, read N- to C-terminus: MERRGSSCLCRCLALLALLPTLSLAQYESWRHYPEYFQEPAPEYHRPEVPSDVAKIQLRLAGQKRKHSEGRVEVYYDGQWGTVCDDDFTIHAAHVVCRELGYVEAKSWTASSSYGKGEGPIWLDNVYCTGSEATLAACSSNGWGVTDCKHTEDVGVVCSEKRIPGFKFDNSLINSIENMNIQVEDIRIRAILSAFRKRTPVTEGYVEVKEGKTWKQICDKHWTAKNSRVVCGMFGFPGEKTYNTKVYKMFAARKKQRYWPYSMDCTGTEAHISSCKLGPQVSLDPVKNVTCENGLPAVVSCVPGQVFSPDGPSRFRKAYKPEQPLVRLRGGANVGEGRVEVLKNGEWGTVCDDKWDLVSASVVCRELGFGSAKEAITGSRLGQGIGPIHLNEIECTGNEKSIIDCKFNAESQGCNHEEDAAVRCNIPAMGFQKKLRLNGGRNPYEGRVEVLVERNGSLVWGMVCGENWGIVEAMVVCRQLGLGFASNAFQETWYWHGNINANKVVMSGVKCSGTELSLAHCRHDGEDVACPEGGVRYGAGVACSETAPDLVLNAEIVQQSTYLEDRPMFMLQCAMEENCLSASAAQTNPTTGYRRLLRFSSQIHNNGQSDFRPKNGRHAWIWHDCHRHYHSMEVFTHYDLLNLNGTKVAEGHKASFCLEDTECEGDIQKSYECANFGEQGITMGCWDMYRHDIDCQWVDITDVPPGDYLFQVVINPNYEVAESDYTNNIMKCRTRYDGHRIWMYNCHIGGSFSEETEKKFEHFSGLINNQVSKR.

The signal sequence occupies residues 1-25 (MERRGSSCLCRCLALLALLPTLSLA). 4 SRCR domains span residues 58 to 159 (LRLA…VVCS), 188 to 302 (IRAI…VSCV), 326 to 425 (VRLR…VRCN), and 435 to 544 (LRLN…VACS). Intrachain disulfides connect C84/C148, C97/C158, C128/C138, C218/C291, C231/C301, C265/C275, C351/C414, C364/C424, and C395/C405. N288 carries N-linked (GlcNAc...) asparagine glycosylation. An N-linked (GlcNAc...) asparagine glycan is attached at N455. Cystine bridges form between C464-C530, C477-C543, and C511-C521. Positions 548–751 (PDLVLNAEIV…WMYNCHIGGS (204 aa)) are lysyl-oxidase like. Ca(2+) is bound by residues D549 and L550. Intrachain disulfides connect C573–C625, C579–C695, C657–C673, and C663–C685. The Cu cation site is built by H626, H628, and H630. A glycan (N-linked (GlcNAc...) asparagine) is linked at N644. The lysine tyrosylquinone (Lys-Tyr) cross-link spans 653–689 (KASFCLEDTECEGDIQKSYECANFGEQGITMGCWDMY). The residue at position 689 (Y689) is a 2',4',5'-topaquinone. Residues E722, D724, N727, and N728 each coordinate Ca(2+). Residues C732 and C746 are joined by a disulfide bond.

The protein belongs to the lysyl oxidase family. As to quaternary structure, component of some chromatin repressor complex. Interacts with SNAI1. Interacts with TAF10. Interacts with HSPA5. Interacts with EFEMP2. Requires Cu cation as cofactor. Lysine tyrosylquinone residue serves as cofactor. Post-translationally, the lysine tyrosylquinone cross-link (LTQ) is generated by condensation of the epsilon-amino group of a lysine with a topaquinone produced by oxidation of tyrosine. In terms of processing, N-glycosylated. N-glycosylation on Asn-455 and Asn-644 may be essential for proper folding and secretion; may be composed of a fucosylated carbohydrates attached to a trimannose N-linked glycan core.

It is found in the secreted. The protein resides in the extracellular space. The protein localises to the extracellular matrix. It localises to the basement membrane. Its subcellular location is the nucleus. It is found in the chromosome. The protein resides in the endoplasmic reticulum. It catalyses the reaction L-lysyl-[protein] + O2 + H2O = (S)-2-amino-6-oxohexanoyl-[protein] + H2O2 + NH4(+). Specifically inhibited by a mouse monoclonal antibody AB0023, inhibition occurs in a non-competitive manner. Mediates the post-translational oxidative deamination of lysine residues on target proteins leading to the formation of deaminated lysine (allysine). Acts as a transcription corepressor and specifically mediates deamination of trimethylated 'Lys-4' of histone H3 (H3K4me3), a specific tag for epigenetic transcriptional activation. Shows no activity against histone H3 when it is trimethylated on 'Lys-9' (H3K9me3) or 'Lys-27' (H3K27me3) or when 'Lys-4' is monomethylated (H3K4me1) or dimethylated (H3K4me2). Also mediates deamination of methylated TAF10, a member of the transcription factor IID (TFIID) complex, which induces release of TAF10 from promoters, leading to inhibition of TFIID-dependent transcription. LOXL2-mediated deamination of TAF10 results in transcriptional repression of genes required for embryonic stem cell pluripotency including POU5F1/OCT4, NANOG, KLF4 and SOX2. Involved in epithelial to mesenchymal transition (EMT) via interaction with SNAI1 and participates in repression of E-cadherin CDH1, probably by mediating deamination of histone H3. During EMT, involved with SNAI1 in negatively regulating pericentromeric heterochromatin transcription. SNAI1 recruits LOXL2 to pericentromeric regions to oxidize histone H3 and repress transcription which leads to release of heterochromatin component CBX5/HP1A, enabling chromatin reorganization and acquisition of mesenchymal traits. Interacts with the endoplasmic reticulum protein HSPA5 which activates the IRE1-XBP1 pathway of the unfolded protein response, leading to expression of several transcription factors involved in EMT and subsequent EMT induction. When secreted into the extracellular matrix, promotes cross-linking of extracellular matrix proteins by mediating oxidative deamination of peptidyl lysine residues in precursors to fibrous collagen and elastin. Acts as a regulator of sprouting angiogenesis, probably via collagen IV scaffolding. Acts as a regulator of chondrocyte differentiation, probably by regulating expression of factors that control chondrocyte differentiation. In Bos taurus (Bovine), this protein is Lysyl oxidase homolog 2 (LOXL2).